Here is a 253-residue protein sequence, read N- to C-terminus: ABC transporter D-alanine-binding periplasmic protein (253 aa).

An N-terminal signal peptide occupies residues 1 to 22 (MLSKKFGLSMIVLGIMSSSAFA). Residues Gly95, Ser97, Arg102, Ala147, and Glu191 each coordinate D-alanine.

It belongs to the bacterial solute-binding protein 3 family. Monomer.

The protein localises to the periplasm. Part of the ABC transporter complex dalSTUV, that imports D-alanine into the cytoplasm. Helps protect the organism from oxidative killing by host neutrophils through sequestration of D-alanine, a substrate that is converted to hydrogen peroxide by the host enzyme DAO (D-amino acid oxidase). DalS shuttles D-alanine from the periplasm to the DalTUV complex situated in the inner membrane and through hydrolysis of ATP, D-alanine is transported across the membrane into the cytoplasm. Not required for the metabolism of D-alanine found in the stem peptide of peptidoglycan. The polypeptide is ABC transporter D-alanine-binding periplasmic protein (Salmonella typhimurium (strain LT2 / SGSC1412 / ATCC 700720)).